The primary structure comprises 164 residues: Phosphopantetheine adenylyltransferase (164 aa).

Residue serine 9 participates in substrate binding. Residues 9–10 (SF) and histidine 17 contribute to the ATP site. 3 residues coordinate substrate: lysine 41, leucine 73, and lysine 87. Residues 88-90 (GLR), glutamate 98, and 123-129 (NSFLSSS) contribute to the ATP site.

This sequence belongs to the bacterial CoaD family. In terms of assembly, homohexamer. Requires Mg(2+) as cofactor.

It is found in the cytoplasm. It catalyses the reaction (R)-4'-phosphopantetheine + ATP + H(+) = 3'-dephospho-CoA + diphosphate. It functions in the pathway cofactor biosynthesis; coenzyme A biosynthesis; CoA from (R)-pantothenate: step 4/5. Reversibly transfers an adenylyl group from ATP to 4'-phosphopantetheine, yielding dephospho-CoA (dPCoA) and pyrophosphate. The sequence is that of Phosphopantetheine adenylyltransferase from Clostridium kluyveri (strain ATCC 8527 / DSM 555 / NBRC 12016 / NCIMB 10680 / K1).